Reading from the N-terminus, the 175-residue chain is uncharacterized protein (175 aa).

It belongs to the asfivirus B175L family.

This is an uncharacterized protein from Ornithodoros (relapsing fever ticks).